Consider the following 288-residue polypeptide: Polyamine aminopropyltransferase (288 aa).

One can recognise a PABS domain in the interval 9–238; sequence ETLHDQFGQY…GIMTFAWATD (230 aa). An S-methyl-5'-thioadenosine-binding site is contributed by Gln33. Positions 64 and 88 each coordinate spermidine. S-methyl-5'-thioadenosine contacts are provided by residues Glu108 and 140 to 141; that span reads DG. The active-site Proton acceptor is the Asp158. Spermidine is bound at residue 158–161; it reads DCTD. An S-methyl-5'-thioadenosine-binding site is contributed by Pro165.

The protein belongs to the spermidine/spermine synthase family. Homodimer or homotetramer.

It is found in the cytoplasm. The enzyme catalyses S-adenosyl 3-(methylsulfanyl)propylamine + putrescine = S-methyl-5'-thioadenosine + spermidine + H(+). It functions in the pathway amine and polyamine biosynthesis; spermidine biosynthesis; spermidine from putrescine: step 1/1. Functionally, catalyzes the irreversible transfer of a propylamine group from the amino donor S-adenosylmethioninamine (decarboxy-AdoMet) to putrescine (1,4-diaminobutane) to yield spermidine. The chain is Polyamine aminopropyltransferase from Escherichia fergusonii (strain ATCC 35469 / DSM 13698 / CCUG 18766 / IAM 14443 / JCM 21226 / LMG 7866 / NBRC 102419 / NCTC 12128 / CDC 0568-73).